The chain runs to 693 residues: Protein-glutamine gamma-glutamyltransferase E (693 aa).

At tyrosine 111 the chain carries Phosphotyrosine. A Phosphothreonine modification is found at threonine 112. Alanine 222, asparagine 225, asparagine 227, and aspartate 228 together coordinate Ca(2+). Cysteine 273 is an active-site residue. Ca(2+) contacts are provided by aspartate 302, aspartate 304, asparagine 306, serine 308, and aspartate 325. Residues histidine 331 and aspartate 354 contribute to the active site. Residues asparagine 394, threonine 416, glutamate 444, and glutamate 449 each coordinate Ca(2+). The disordered stretch occupies residues lysine 455–serine 482.

The protein belongs to the transglutaminase superfamily. Transglutaminase family. In terms of assembly, consists of two polypeptide chains, which are synthesized as a precursor form of a single polypeptide. Ca(2+) serves as cofactor. Post-translationally, activated by proteolytic processing. In vitro activation is commonly achieved by cleavage with dispase, a neutral bacterial protease. Physiological activation may be catalyzed by CTSL and, to a lesser extent, by CTSS.

The protein localises to the cytoplasm. It catalyses the reaction L-glutaminyl-[protein] + L-lysyl-[protein] = [protein]-L-lysyl-N(6)-5-L-glutamyl-[protein] + NH4(+). Functionally, catalyzes the calcium-dependent formation of isopeptide cross-links between glutamine and lysine residues in various proteins, as well as the conjugation of polyamines to proteins. Involved in the formation of the cornified envelope (CE), a specialized component consisting of covalent cross-links of proteins beneath the plasma membrane of terminally differentiated keratinocytes. Catalyzes small proline-rich proteins and LOR cross-linking to form small interchain oligomers, which are further cross-linked by TGM1 onto the growing CE scaffold. In hair follicles, involved in cross-linking structural proteins to hardening the inner root sheath. The protein is Protein-glutamine gamma-glutamyltransferase E (Tgm3) of Rattus norvegicus (Rat).